Here is a 363-residue protein sequence, read N- to C-terminus: Adenosine deaminase (363 aa).

The Zn(2+) site is built by histidine 42 and histidine 44. Residues 44 to 46, aspartate 172, and glycine 201 contribute to the a purine D-ribonucleoside site; that span reads HLD. Residues 170-184 are gating helix loop; regulates binding affinity for substrates and thus substrate selectivity; that stretch reads IGDTGHEAANIKASA. Position 226 (histidine 226) interacts with Zn(2+). Residues glutamate 229, histidine 253, and aspartate 310 each coordinate a purine D-ribonucleoside. Aspartate 310 provides a ligand contact to Zn(2+).

It belongs to the metallo-dependent hydrolases superfamily. Adenosine and AMP deaminases family. It depends on Zn(2+) as a cofactor.

It carries out the reaction adenosine + H2O + H(+) = inosine + NH4(+). The catalysed reaction is S-methyl-5'-thioadenosine + H2O + H(+) = S-methyl-5'-thioinosine + NH4(+). The protein operates within purine metabolism; purine nucleoside salvage. Its activity is regulated as follows. Inhibited by coformycin and methylthiocoformycin (MT-coformycin). In terms of biological role, catalyzes the hydrolytic deamination of adenosine to produce inosine. Unlike mammalian adenosine deaminases, also catalyzes the deamination of 5'-methylthioadenosine (MTA), a by-product of polyamine biosynthesis, to produce 5'-methylthioinosine (MTI). Plays an essential role in the purine salvage pathway which allows the parasite to use host cell purines for the synthesis of nucleic acids. This chain is Adenosine deaminase, found in Plasmodium cynomolgi (strain B).